Here is a 691-residue protein sequence, read N- to C-terminus: Choline transporter-like 1 (691 aa).

Residues 1–10 (MGCAESKDGE) show a composition bias toward basic and acidic residues. Positions 1 to 20 (MGCAESKDGEGEAQNNRPKY) are disordered. 3 helical membrane passes run 28 to 48 (WLAIYIIFWLFLIVIAIFSFV), 205 to 225 (WHIIAMVCGLALLISIALVTM), and 232 to 252 (IVSWIICVLVIVASVALTVAL). An N-linked (GlcNAc...) asparagine glycan is attached at N261. Transmembrane regions (helical) follow at residues 282-302 (VLTLAVLATITMIILIVVIYF) and 332-352 (LLAFLVLIAFLSFWVAVIICL). A glycan (N-linked (GlcNAc...) asparagine) is linked at N385. A run of 4 helical transmembrane segments spans residues 408 to 428 (SMFWIYVVGLIWTVEFIFACQ), 527 to 547 (VVAIESINFCPAAGIAWNAMA), 562 to 582 (FILFLGKVVVAALSGLIGIVL), and 591 to 611 (FYMAPVIIIIIFSFFIAHIIL).

Belongs to the CTL (choline transporter-like) family.

The protein localises to the membrane. This Drosophila melanogaster (Fruit fly) protein is Choline transporter-like 1.